The primary structure comprises 155 residues: Deoxyuridine 5'-triphosphate nucleotidohydrolase (155 aa).

Residues 75 to 77 (RSG), Asn88, and 92 to 94 (TVD) each bind substrate.

The protein belongs to the dUTPase family. The cofactor is Mg(2+).

The enzyme catalyses dUTP + H2O = dUMP + diphosphate + H(+). Its pathway is pyrimidine metabolism; dUMP biosynthesis; dUMP from dCTP (dUTP route): step 2/2. Its function is as follows. This enzyme is involved in nucleotide metabolism: it produces dUMP, the immediate precursor of thymidine nucleotides and it decreases the intracellular concentration of dUTP so that uracil cannot be incorporated into DNA. This chain is Deoxyuridine 5'-triphosphate nucleotidohydrolase, found in Caulobacter vibrioides (strain ATCC 19089 / CIP 103742 / CB 15) (Caulobacter crescentus).